The following is a 429-amino-acid chain: Enolase (429 aa).

Gln-164 contributes to the (2R)-2-phosphoglycerate binding site. The active-site Proton donor is Glu-206. Mg(2+) is bound by residues Asp-243, Glu-286, and Asp-313. 4 residues coordinate (2R)-2-phosphoglycerate: Lys-338, Arg-367, Ser-368, and Lys-389. Residue Lys-338 is the Proton acceptor of the active site.

It belongs to the enolase family. Mg(2+) is required as a cofactor.

It is found in the cytoplasm. The protein resides in the secreted. The protein localises to the cell surface. It catalyses the reaction (2R)-2-phosphoglycerate = phosphoenolpyruvate + H2O. The protein operates within carbohydrate degradation; glycolysis; pyruvate from D-glyceraldehyde 3-phosphate: step 4/5. Its function is as follows. Catalyzes the reversible conversion of 2-phosphoglycerate (2-PG) into phosphoenolpyruvate (PEP). It is essential for the degradation of carbohydrates via glycolysis. This Thermosipho melanesiensis (strain DSM 12029 / CIP 104789 / BI429) protein is Enolase.